Consider the following 506-residue polypeptide: Probable UTP--glucose-1-phosphate uridylyltransferase (506 aa).

Phosphoserine occurs at positions 15 and 17. UTP contacts are provided by residues 115 to 118 (LNGG), lysine 129, glutamine 192, and glycine 221. 117-118 (GG) contacts substrate. Residue lysine 129 participates in Mg(2+) binding. Substrate contacts are provided by residues histidine 222 and 250 to 252 (NID). Residues aspartate 252 and lysine 394 each contribute to the UTP site. A Mg(2+)-binding site is contributed by aspartate 252. The active site involves lysine 394. An oligomerization region spans residues 455–506 (HLTITGDVNIGRNVTLKGTVIIVASDANRIDIPNGSVLENCVITGNLNILEH).

It belongs to the UDPGP type 1 family. As to quaternary structure, homooctamer.

It is found in the cytoplasm. The protein localises to the nucleus. The enzyme catalyses alpha-D-glucose 1-phosphate + UTP + H(+) = UDP-alpha-D-glucose + diphosphate. Plays a central role as a glucosyl donor in cellular metabolic pathways. This is Probable UTP--glucose-1-phosphate uridylyltransferase (fyu1) from Schizosaccharomyces pombe (strain 972 / ATCC 24843) (Fission yeast).